A 76-amino-acid polypeptide reads, in one-letter code: Omega/kappa-hexatoxin-Ar1g (76 aa).

An N-terminal signal peptide occupies residues Met-1–Ala-22. The propeptide occupies Gly-23 to Val-35. 3 cysteine pairs are disulfide-bonded: Cys-40–Cys-55, Cys-47–Cys-60, and Cys-54–Cys-74.

It belongs to the neurotoxin 08 (Shiva) family. 02 (omega/kappa toxin) subfamily. As to expression, expressed by the venom gland.

Its subcellular location is the secreted. Functionally, toxin that may inhibit ion channels. This Atrax robustus (Sydney funnel-web spider) protein is Omega/kappa-hexatoxin-Ar1g.